Consider the following 245-residue polypeptide: Orotidine 5'-phosphate decarboxylase (245 aa).

Substrate contacts are provided by residues D22, K44, 71 to 80 (DLKFHDIPNT), T131, R192, Q201, G221, and R222. The active-site Proton donor is the K73.

Belongs to the OMP decarboxylase family. Type 1 subfamily. Homodimer.

The catalysed reaction is orotidine 5'-phosphate + H(+) = UMP + CO2. It functions in the pathway pyrimidine metabolism; UMP biosynthesis via de novo pathway; UMP from orotate: step 2/2. Functionally, catalyzes the decarboxylation of orotidine 5'-monophosphate (OMP) to uridine 5'-monophosphate (UMP). This chain is Orotidine 5'-phosphate decarboxylase, found in Escherichia fergusonii (strain ATCC 35469 / DSM 13698 / CCUG 18766 / IAM 14443 / JCM 21226 / LMG 7866 / NBRC 102419 / NCTC 12128 / CDC 0568-73).